The following is a 38-amino-acid chain: Large ribosomal subunit protein bL36 (38 aa).

This sequence belongs to the bacterial ribosomal protein bL36 family.

In Hamiltonella defensa subsp. Acyrthosiphon pisum (strain 5AT), this protein is Large ribosomal subunit protein bL36.